The primary structure comprises 321 residues: Methionine import ATP-binding protein MetN (321 aa).

The region spanning 2-241 (INAVDLHKVY…PGSLLARSLF (240 aa)) is the ABC transporter domain. Position 38–45 (38–45 (GPSGAGKS)) interacts with ATP.

It belongs to the ABC transporter superfamily. Methionine importer (TC 3.A.1.24) family. The complex is composed of two ATP-binding proteins (MetN), two transmembrane proteins (MetI) and a solute-binding protein (MetQ).

It localises to the cell membrane. It catalyses the reaction L-methionine(out) + ATP + H2O = L-methionine(in) + ADP + phosphate + H(+). It carries out the reaction D-methionine(out) + ATP + H2O = D-methionine(in) + ADP + phosphate + H(+). In terms of biological role, part of the ABC transporter complex MetNIQ involved in methionine import. Responsible for energy coupling to the transport system. This Thermobifida fusca (strain YX) protein is Methionine import ATP-binding protein MetN.